Consider the following 207-residue polypeptide: Probable GTP-binding protein EngB (207 aa).

The EngB-type G domain maps to 24 to 199 (GGYEVAFAGR…RAIVGAWLGL (176 aa)). Residues 32 to 39 (GRSNAGKS), 59 to 63 (GRTQQ), 77 to 80 (DLPG), 144 to 147 (TKAD), and 178 to 180 (YSG) contribute to the GTP site. Residues serine 39 and threonine 61 each coordinate Mg(2+).

It belongs to the TRAFAC class TrmE-Era-EngA-EngB-Septin-like GTPase superfamily. EngB GTPase family. Requires Mg(2+) as cofactor.

Necessary for normal cell division and for the maintenance of normal septation. The sequence is that of Probable GTP-binding protein EngB from Xanthomonas euvesicatoria pv. vesicatoria (strain 85-10) (Xanthomonas campestris pv. vesicatoria).